Reading from the N-terminus, the 163-residue chain is E1B protein, small T-antigen (163 aa).

This sequence belongs to the adenoviridae E1B 19 kDa protein family.

Its subcellular location is the host cell membrane. The protein localises to the host nucleus envelope. It localises to the host nucleus lamina. In terms of biological role, putative adenovirus Bcl-2 homolog that inhibits apoptosis induced by TNF or FAS pathways, as well as p53-mediated apoptosis. Without E1B 19K function, virus production is compromised because of premature death of host cell. Interacts with Bax protein in cell lysates. The chain is E1B protein, small T-antigen from Human adenovirus A serotype 12 (HAdV-12).